Reading from the N-terminus, the 105-residue chain is DNA-directed RNA polymerase RPB9 homolog (105 aa).

Zn(2+) is bound by residues Cys4, Cys7, Cys24, Cys26, Cys73, Cys76, and Cys96. The C4-type; atypical zinc finger occupies Cys4–Cys26.

It belongs to the Asfivirus DNA-directed RNA polymerase RPB9 homolog family. In terms of assembly, part of the viral DNA-directed RNA polymerase that consists of 8 polII-like subunits (RPB1, RPB2, RPB3, RPB5, RPB6, RPB7, RPB9, RPB10), a capping enzyme and a termination factor.

The protein localises to the host cytoplasm. Its function is as follows. Component of the DNA-directed RNA polymerase (RNAP) that catalyzes the transcription in the cytoplasm of viral DNA into RNA using the four ribonucleoside triphosphates as substrates. The polypeptide is DNA-directed RNA polymerase RPB9 homolog (African swine fever virus (isolate Pig/Kenya/KEN-50/1950) (ASFV)).